Reading from the N-terminus, the 485-residue chain is Glutamyl-tRNA(Gln) amidotransferase subunit A (485 aa).

Residues lysine 78 and serine 153 each act as charge relay system in the active site. The active-site Acyl-ester intermediate is serine 177.

It belongs to the amidase family. GatA subfamily. As to quaternary structure, heterotrimer of A, B and C subunits.

It catalyses the reaction L-glutamyl-tRNA(Gln) + L-glutamine + ATP + H2O = L-glutaminyl-tRNA(Gln) + L-glutamate + ADP + phosphate + H(+). In terms of biological role, allows the formation of correctly charged Gln-tRNA(Gln) through the transamidation of misacylated Glu-tRNA(Gln) in organisms which lack glutaminyl-tRNA synthetase. The reaction takes place in the presence of glutamine and ATP through an activated gamma-phospho-Glu-tRNA(Gln). This chain is Glutamyl-tRNA(Gln) amidotransferase subunit A, found in Desulfatibacillum aliphaticivorans.